A 298-amino-acid chain; its full sequence is 4-hydroxy-tetrahydrodipicolinate synthase (298 aa).

T48 serves as a coordination point for pyruvate. Y137 serves as the catalytic Proton donor/acceptor. The active-site Schiff-base intermediate with substrate is the K166. A pyruvate-binding site is contributed by I207.

This sequence belongs to the DapA family. Homotetramer; dimer of dimers.

The protein localises to the cytoplasm. The enzyme catalyses L-aspartate 4-semialdehyde + pyruvate = (2S,4S)-4-hydroxy-2,3,4,5-tetrahydrodipicolinate + H2O + H(+). The protein operates within amino-acid biosynthesis; L-lysine biosynthesis via DAP pathway; (S)-tetrahydrodipicolinate from L-aspartate: step 3/4. In terms of biological role, catalyzes the condensation of (S)-aspartate-beta-semialdehyde [(S)-ASA] and pyruvate to 4-hydroxy-tetrahydrodipicolinate (HTPA). The chain is 4-hydroxy-tetrahydrodipicolinate synthase from Campylobacter jejuni subsp. doylei (strain ATCC BAA-1458 / RM4099 / 269.97).